A 289-amino-acid polypeptide reads, in one-letter code: tRNA pseudouridine synthase A (289 aa).

Asp-67 acts as the Nucleophile in catalysis. Tyr-125 is a substrate binding site.

This sequence belongs to the tRNA pseudouridine synthase TruA family. As to quaternary structure, homodimer.

It carries out the reaction uridine(38/39/40) in tRNA = pseudouridine(38/39/40) in tRNA. In terms of biological role, formation of pseudouridine at positions 38, 39 and 40 in the anticodon stem and loop of transfer RNAs. The sequence is that of tRNA pseudouridine synthase A from Prochlorococcus marinus (strain MIT 9211).